Consider the following 125-residue polypeptide: MKVLASFARRLSLFAVAAVLCVGSFFLSAAPASAQTVAIKMGADNGMLAFEPSTIEIQAGDTVQWVNNKLAPHNVVVEGQPELSHKDLAFSPGETFEATFSEPGTYTYYCEPHRGAGMVGKIVVQ.

An N-terminal signal peptide occupies residues 1-34 (MKVLASFARRLSLFAVAAVLCVGSFFLSAAPASA). The Plastocyanin-like domain maps to 35–125 (QTVAIKMGAD…AGMVGKIVVQ (91 aa)). The Cu cation site is built by His73, Cys110, His113, and Met118.

It belongs to the plastocyanin family. Requires Cu(2+) as cofactor.

The protein localises to the cellular thylakoid membrane. Its function is as follows. Participates in electron transfer between P700 and the cytochrome b6-f complex in photosystem I. In Synechococcus elongatus (strain ATCC 33912 / PCC 7942 / FACHB-805) (Anacystis nidulans R2), this protein is Plastocyanin (petE).